We begin with the raw amino-acid sequence, 609 residues long: Dihydroxy-acid dehydratase 1 (609 aa).

A Mg(2+)-binding site is contributed by D81. C122 contacts [2Fe-2S] cluster. Residues D123 and K124 each coordinate Mg(2+). An N6-carboxylysine modification is found at K124. C195 lines the [2Fe-2S] cluster pocket. E491 contacts Mg(2+). The active-site Proton acceptor is the S517.

This sequence belongs to the IlvD/Edd family. Homodimer. Requires [2Fe-2S] cluster as cofactor. The cofactor is Mg(2+).

The catalysed reaction is (2R)-2,3-dihydroxy-3-methylbutanoate = 3-methyl-2-oxobutanoate + H2O. The enzyme catalyses (2R,3R)-2,3-dihydroxy-3-methylpentanoate = (S)-3-methyl-2-oxopentanoate + H2O. Its pathway is amino-acid biosynthesis; L-isoleucine biosynthesis; L-isoleucine from 2-oxobutanoate: step 3/4. The protein operates within amino-acid biosynthesis; L-valine biosynthesis; L-valine from pyruvate: step 3/4. Functionally, functions in the biosynthesis of branched-chain amino acids. Catalyzes the dehydration of (2R,3R)-2,3-dihydroxy-3-methylpentanoate (2,3-dihydroxy-3-methylvalerate) into 2-oxo-3-methylpentanoate (2-oxo-3-methylvalerate) and of (2R)-2,3-dihydroxy-3-methylbutanoate (2,3-dihydroxyisovalerate) into 2-oxo-3-methylbutanoate (2-oxoisovalerate), the penultimate precursor to L-isoleucine and L-valine, respectively. The protein is Dihydroxy-acid dehydratase 1 of Acinetobacter baylyi (strain ATCC 33305 / BD413 / ADP1).